A 70-amino-acid chain; its full sequence is ATP synthase subunit c (70 aa).

The next 2 helical transmembrane spans lie at 3–23 and 44–64; these read ALAA…IGIA and LFFI…VIAI.

Belongs to the ATPase C chain family. As to quaternary structure, F-type ATPases have 2 components, F(1) - the catalytic core - and F(0) - the membrane proton channel. F(1) has five subunits: alpha(3), beta(3), gamma(1), delta(1), epsilon(1). F(0) has three main subunits: a(1), b(2) and c(10-14). The alpha and beta chains form an alternating ring which encloses part of the gamma chain. F(1) is attached to F(0) by a central stalk formed by the gamma and epsilon chains, while a peripheral stalk is formed by the delta and b chains.

It is found in the cell membrane. F(1)F(0) ATP synthase produces ATP from ADP in the presence of a proton or sodium gradient. F-type ATPases consist of two structural domains, F(1) containing the extramembraneous catalytic core and F(0) containing the membrane proton channel, linked together by a central stalk and a peripheral stalk. During catalysis, ATP synthesis in the catalytic domain of F(1) is coupled via a rotary mechanism of the central stalk subunits to proton translocation. In terms of biological role, key component of the F(0) channel; it plays a direct role in translocation across the membrane. A homomeric c-ring of between 10-14 subunits forms the central stalk rotor element with the F(1) delta and epsilon subunits. The protein is ATP synthase subunit c of Caldicellulosiruptor saccharolyticus (strain ATCC 43494 / DSM 8903 / Tp8T 6331).